We begin with the raw amino-acid sequence, 357 residues long: UPF0283 membrane protein BOV_0999 (357 aa).

The interval M1–K36 is disordered. A compositionally biased stretch (basic and acidic residues) spans E27–K36. 2 consecutive transmembrane segments (helical) span residues I78–L98 and L109–L129.

This sequence belongs to the UPF0283 family.

It is found in the cell inner membrane. This is UPF0283 membrane protein BOV_0999 from Brucella ovis (strain ATCC 25840 / 63/290 / NCTC 10512).